Here is a 565-residue protein sequence, read N- to C-terminus: Oxygen-dependent choline dehydrogenase (565 aa).

6 to 35 (DYIIIGAGSAGNVLATRLTEDADVSVLLLE) contributes to the FAD binding site. His475 serves as the catalytic Proton acceptor. Residues 541-565 (RSNAPYFVAGERPVRGQPQRAVSAA) are disordered.

This sequence belongs to the GMC oxidoreductase family. It depends on FAD as a cofactor.

The enzyme catalyses choline + A = betaine aldehyde + AH2. It carries out the reaction betaine aldehyde + NAD(+) + H2O = glycine betaine + NADH + 2 H(+). It functions in the pathway amine and polyamine biosynthesis; betaine biosynthesis via choline pathway; betaine aldehyde from choline (cytochrome c reductase route): step 1/1. Its function is as follows. Involved in the biosynthesis of the osmoprotectant glycine betaine. Catalyzes the oxidation of choline to betaine aldehyde and betaine aldehyde to glycine betaine at the same rate. In Ectopseudomonas mendocina (strain ymp) (Pseudomonas mendocina), this protein is Oxygen-dependent choline dehydrogenase.